The sequence spans 229 residues: Ras-like protein rasV (229 aa).

40–47 (GDGGVGKT) contributes to the GTP binding site. The Effector region signature appears at 62–70 (YDPTIEDSY). GTP contacts are provided by residues 87 to 91 (DTAGQ) and 146 to 149 (NKSD). C226 bears the Cysteine methyl ester mark. The S-geranylgeranyl cysteine moiety is linked to residue C226. A propeptide spans 227–229 (KVM) (removed in mature form).

The protein belongs to the small GTPase superfamily. Ras family.

The protein resides in the cell membrane. The enzyme catalyses GTP + H2O = GDP + phosphate + H(+). Functionally, ras proteins bind GDP/GTP and possess intrinsic GTPase activity. The sequence is that of Ras-like protein rasV (rasV) from Dictyostelium discoideum (Social amoeba).